The sequence spans 460 residues: Monocarboxylate transporter 12 (460 aa).

The Cytoplasmic portion of the chain corresponds to 1-10 (MTQEKRSLHK). 12 helical membrane-spanning segments follow: residues 11-31 (TPPD…VTVC), 58-78 (AWIH…GSYV), 86-106 (VGII…SFAT), 115-135 (LGVL…AMVG), 148-168 (IAMS…QLLI), 177-197 (LLIL…MRPI), 246-266 (FIIL…PFVY), 282-302 (AFLM…FGWV), 329-349 (FLPI…FGYF), 354-374 (VALI…SSAL), 376-396 (VVFF…GWLV), and 406-426 (FLLS…AKII). Residues 427–460 (NRIKKNPQATVVRSSDIKQEVWTNGDVSCLNAIS) lie on the Cytoplasmic side of the membrane.

Belongs to the major facilitator superfamily. Monocarboxylate porter (TC 2.A.1.13) family.

It is found in the cell membrane. The protein resides in the basolateral cell membrane. The catalysed reaction is creatine(in) = creatine(out). It carries out the reaction guanidinoacetate(in) = guanidinoacetate(out). Its function is as follows. Functions as a transporter for creatine and as well for its precursor guanidinoacetate. Transport of creatine and GAA is independent of resting membrane potential and extracellular Na(+), Cl(-), or pH. Contributes to the process of creatine biosynthesis and distribution. The sequence is that of Monocarboxylate transporter 12 (slc16a12) from Xenopus laevis (African clawed frog).